The primary structure comprises 314 residues: Ribosomal RNA small subunit methyltransferase H (314 aa).

Residues 32-34 (GGH), Asp52, Phe79, Asp100, and Gln107 contribute to the S-adenosyl-L-methionine site.

Belongs to the methyltransferase superfamily. RsmH family.

It is found in the cytoplasm. It catalyses the reaction cytidine(1402) in 16S rRNA + S-adenosyl-L-methionine = N(4)-methylcytidine(1402) in 16S rRNA + S-adenosyl-L-homocysteine + H(+). Specifically methylates the N4 position of cytidine in position 1402 (C1402) of 16S rRNA. The protein is Ribosomal RNA small subunit methyltransferase H of Shouchella clausii (strain KSM-K16) (Alkalihalobacillus clausii).